The chain runs to 1217 residues: Myosin-1 (1217 aa).

Positions 1 to 26 (MAILKRTNRAKAATAAAPNSTGKSNG) are disordered. The span at 10 to 19 (AKAATAAAPN) shows a compositional bias: low complexity. ATP-binding positions include 17 to 24 (APNSTGKS) and 133 to 140 (GESGAGKT). The 681-residue stretch at 40–720 (VGVDDLTLLS…TLFALEDMRD (681 aa)) folds into the Myosin motor domain. Residue serine 361 is modified to Phosphoserine. Position 363 is a phosphotyrosine (tyrosine 363). Residues 409–491 (SIGILDIYGF…PGLFAAMNDA (83 aa)) are actin-binding. 2 IQ domains span residues 724-744 (DTMA…RSEA) and 745-770 (AACI…EGTK). A Phosphoserine modification is found at serine 742. Positions 778-964 (RRRYSILGSR…TIHVGTGLPP (187 aa)) constitute a TH1 domain. Serine 782 carries the phosphoserine modification. A disordered region spans residues 961 to 1105 (GLPPTSKSKP…PPPPPPPAEV (145 aa)). Positions 998 to 1013 (KPVSMPAAKSKPAPMA) are enriched in low complexity. Residues 1015 to 1025 (PVSTAQQTQNR) are compositionally biased toward polar residues. Positions 1045-1075 (TSTTTTIKQATTVSASKPAPSTVTSAASSPS) are enriched in low complexity. Polar residues predominate over residues 1076–1088 (NISKPSAPVANNV). Positions 1093-1103 (AVPPPPPPPPA) are enriched in pro residues. The 60-residue stretch at 1106 to 1165 (EKKDLYLALYDFAGRSPNEMTIKKDEIIEIVQKEPSGWWLALKNGAEGWVPATYVTEYKG) folds into the SH3 domain. Serine 1211 is subject to Phosphoserine.

It belongs to the TRAFAC class myosin-kinesin ATPase superfamily. Myosin family. As to quaternary structure, interacts with cam2. Interacts (via SH3 domain) with vrp1. In terms of processing, phosphorylation of the TEDS site (Ser-361) is required for the polarization of the actin cytoskeleton. Phosphorylation probably activates the myosin-I ATPase activity.

Its subcellular location is the cytoplasm. The protein resides in the cytoskeleton. It localises to the actin patch. In terms of biological role, type-I myosin implicated in the organization of the actin cytoskeleton. Required for proper actin cytoskeleton polarization. At the cell cortex, assembles in patch-like structures together with proteins from the actin-polymerizing machinery and promotes actin assembly. Functions as actin nucleation-promoting factor (NPF) for the Arp2/3 complex. Contributes to proper septation by transporting vesicles containing septal material to the division site and is involved in the formation of sterol-rich membrane domains at the cell division site. Required also for mating. In Schizosaccharomyces pombe (strain 972 / ATCC 24843) (Fission yeast), this protein is Myosin-1 (myo1).